Here is a 186-residue protein sequence, read N- to C-terminus: MASTNDLKNGLVLDLDGQLWTVVEFQHVKPGKGPAFVRTKLKHVLSGKTVDKTFNAGIKVDTATVDKRDMQYLYKDGDDFVFMDSSDYEQFHVGPQIVGDAANFMLENTEVIVALHEGNPLYVELPTSVVLEITYTEPGLQGDRSSAGTKAATVETGYQIQVPLFLEIGTKVKVDTRSGDYLGRVN.

It belongs to the elongation factor P family.

It localises to the cytoplasm. Its pathway is protein biosynthesis; polypeptide chain elongation. Involved in peptide bond synthesis. Stimulates efficient translation and peptide-bond synthesis on native or reconstituted 70S ribosomes in vitro. Probably functions indirectly by altering the affinity of the ribosome for aminoacyl-tRNA, thus increasing their reactivity as acceptors for peptidyl transferase. The sequence is that of Elongation factor P from Beutenbergia cavernae (strain ATCC BAA-8 / DSM 12333 / CCUG 43141 / JCM 11478 / NBRC 16432 / NCIMB 13614 / HKI 0122).